A 221-amino-acid chain; its full sequence is Immediate early response gene 2 protein (221 aa).

Position 1 is an N-acetylmethionine (Met-1). A disordered region spans residues Glu-105–Pro-155. The span at Ser-125–Val-136 shows a compositional bias: low complexity.

This sequence belongs to the IER family.

The protein localises to the cytoplasm. It is found in the nucleus. In terms of biological role, DNA-binding protein that seems to act as a transcription factor. Involved in the regulation of neuronal differentiation, acts upon JNK-signaling pathway activation and plays a role in neurite outgrowth in hippocampal cells. May mediate with FIBP FGF-signaling in the establishment of laterality in the embryo. Promotes cell motility, seems to stimulate tumor metastasis. This is Immediate early response gene 2 protein (Ier2) from Mus musculus (Mouse).